Consider the following 192-residue polypeptide: Adenylate kinase (192 aa).

An ATP-binding site is contributed by 10-18; it reads GVPGVGGTT.

Belongs to the archaeal adenylate kinase family. In terms of assembly, monomer.

It localises to the cytoplasm. The enzyme catalyses AMP + ATP = 2 ADP. This Methanococcus maripaludis (strain C7 / ATCC BAA-1331) protein is Adenylate kinase.